A 224-amino-acid chain; its full sequence is Late embryogenesis abundant protein, group 3 (224 aa).

Disordered regions lie at residues 1-169 (MASN…KDKT) and 193-224 (NTLGMGGDNTITTKDNTTGATTKDTTTTTRNH). Residues 13–23 (GETKARNEEKT) show a composition bias toward basic and acidic residues. Repeat copies occupy residues 26–36 (VMGATKDKAGQ), 37–47 (TTEATKQKAGE), 48–58 (TTEATKQKAAE), 59–69 (TTEAAKQKASE), and 70–80 (TAEATKQKAAE). The interval 26 to 153 (VMGATKDKAG…TEAAKQKASE (128 aa)) is 12 X 11 AA tandem repeats. Basic and acidic residues-rich tracts occupy residues 41–85 (TKQK…KDKT), 92–109 (AKEKTYETAQSAKERAAQ), and 120–151 (EKTEAAKQKAAETTEAARQKAAEATEAAKQKA). A 6; truncated repeat occupies 81–87 (AKDKTAQ). A run of 5 repeats spans residues 88–98 (TAQAAKEKTYE), 99–109 (TAQSAKERAAQ), 121–131 (KTEAAKQKAAE), 132–142 (TTEAARQKAAE), and 143–153 (ATEAAKQKASE). Over residues 200–224 (DNTITTKDNTTGATTKDTTTTTRNH) the composition is skewed to low complexity.

Belongs to the LEA type 4 family.

In Triticum aestivum (Wheat), this protein is Late embryogenesis abundant protein, group 3.